We begin with the raw amino-acid sequence, 182 residues long: Lipoprotein signal peptidase (182 aa).

The next 4 helical transmembrane spans lie at 12-32 (FLWI…TVID), 40-60 (IQVL…AFSF), 70-90 (WFFT…LKQS), and 97-117 (LPVA…DRLV). Catalysis depends on residues Asp123 and Asp141. A helical transmembrane segment spans residues 136 to 156 (AFNIADSAIFIGAALLIIDMF). The interval 161-182 (KKSEENGAESKAGSANSSETIK) is disordered. Polar residues predominate over residues 173–182 (GSANSSETIK).

This sequence belongs to the peptidase A8 family.

It is found in the cell inner membrane. It carries out the reaction Release of signal peptides from bacterial membrane prolipoproteins. Hydrolyzes -Xaa-Yaa-Zaa-|-(S,diacylglyceryl)Cys-, in which Xaa is hydrophobic (preferably Leu), and Yaa (Ala or Ser) and Zaa (Gly or Ala) have small, neutral side chains.. Its pathway is protein modification; lipoprotein biosynthesis (signal peptide cleavage). This protein specifically catalyzes the removal of signal peptides from prolipoproteins. The chain is Lipoprotein signal peptidase from Alteromonas mediterranea (strain DSM 17117 / CIP 110805 / LMG 28347 / Deep ecotype).